Consider the following 347-residue polypeptide: Transcription factor EC (347 aa).

Residues 1-119 (MTLDHQIINP…GLTSASCPSS (119 aa)) are necessary for transcriptional transactivation. The 54-residue stretch at 139–192 (QKKDNHNLIERRRRYNINYRIKELGTLIPKSNDPDMRWNKGTILKASVEYIKWL) folds into the bHLH domain. The tract at residues 271–347 (PSPELCDQAI…SFSSDDGDEL (77 aa)) is necessary for transcriptional transactivation. The disordered stretch occupies residues 319–347 (DPLLSATSPAVSKESSRRSSFSSDDGDEL). Positions 326-341 (SPAVSKESSRRSSFSS) are enriched in low complexity.

The protein belongs to the MiT/TFE family. In terms of assembly, homodimer. Forms heterodimers with TFE3. Forms heterodimers with MITF. Interacts with MITF. Expressed moderately in spleen, kidney, bone marrow, small intestine and leukocytes. Expressed weakly in testis, trachea and colon.

It localises to the nucleus. In terms of biological role, transcriptional regulator that acts as a repressor or an activator. Acts as a transcriptional repressor on minimal promoter containing element F (that includes an E-box sequence). Binds to element F in an E-box sequence-specific manner. Acts as a transcriptional transactivator on the proximal promoter region of the tartrate-resistant acid phosphatase (TRAP) E-box containing promoter. Collaborates with MITF in target gene activation. Acts as a transcriptional repressor on minimal promoter containing mu E3 enhancer sequence. Binds to mu E3 DNA sequence of the immunoglobulin heavy-chain gene enhancer. Binds DNA in a homo- or heterodimeric form. In Homo sapiens (Human), this protein is Transcription factor EC (TFEC).